The chain runs to 485 residues: Adenosylhomocysteinase (485 aa).

Substrate-binding residues include T64, D139, and E205. 206 to 208 provides a ligand contact to NAD(+); the sequence is TTT. Substrate contacts are provided by K235 and D239. Residues N240, 269-274, E292, N327, 348-350, and N397 each bind NAD(+); these read GYGDVG and IGH.

This sequence belongs to the adenosylhomocysteinase family. As to quaternary structure, homotetramer. It depends on NAD(+) as a cofactor.

It carries out the reaction S-adenosyl-L-homocysteine + H2O = L-homocysteine + adenosine. It functions in the pathway amino-acid biosynthesis; L-homocysteine biosynthesis; L-homocysteine from S-adenosyl-L-homocysteine: step 1/1. Functionally, adenosylhomocysteine is a competitive inhibitor of S-adenosyl-L-methionine-dependent methyl transferase reactions; therefore adenosylhomocysteinase may play a key role in the control of methylations via regulation of the intracellular concentration of adenosylhomocysteine. The sequence is that of Adenosylhomocysteinase (SAHH) from Catharanthus roseus (Madagascar periwinkle).